We begin with the raw amino-acid sequence, 243 residues long: Pyridoxine 5'-phosphate synthase (243 aa).

Asn-9 contacts 3-amino-2-oxopropyl phosphate. A 1-deoxy-D-xylulose 5-phosphate-binding site is contributed by 11–12; the sequence is DH. Arg-20 serves as a coordination point for 3-amino-2-oxopropyl phosphate. Catalysis depends on His-45, which acts as the Proton acceptor. Residues Arg-47 and His-52 each coordinate 1-deoxy-D-xylulose 5-phosphate. The active-site Proton acceptor is Glu-72. A 1-deoxy-D-xylulose 5-phosphate-binding site is contributed by Thr-102. His-193 serves as the catalytic Proton donor. Residues Gly-194 and 215–216 contribute to the 3-amino-2-oxopropyl phosphate site; that span reads GH.

The protein belongs to the PNP synthase family. In terms of assembly, homooctamer; tetramer of dimers.

Its subcellular location is the cytoplasm. The enzyme catalyses 3-amino-2-oxopropyl phosphate + 1-deoxy-D-xylulose 5-phosphate = pyridoxine 5'-phosphate + phosphate + 2 H2O + H(+). It participates in cofactor biosynthesis; pyridoxine 5'-phosphate biosynthesis; pyridoxine 5'-phosphate from D-erythrose 4-phosphate: step 5/5. Catalyzes the complicated ring closure reaction between the two acyclic compounds 1-deoxy-D-xylulose-5-phosphate (DXP) and 3-amino-2-oxopropyl phosphate (1-amino-acetone-3-phosphate or AAP) to form pyridoxine 5'-phosphate (PNP) and inorganic phosphate. The protein is Pyridoxine 5'-phosphate synthase of Escherichia coli O157:H7.